Here is a 120-residue protein sequence, read N- to C-terminus: Large ribosomal subunit protein bL19 (120 aa).

Belongs to the bacterial ribosomal protein bL19 family.

Its function is as follows. This protein is located at the 30S-50S ribosomal subunit interface and may play a role in the structure and function of the aminoacyl-tRNA binding site. This Trichormus variabilis (strain ATCC 29413 / PCC 7937) (Anabaena variabilis) protein is Large ribosomal subunit protein bL19.